The following is a 1438-amino-acid chain: MMENRNNNNNRDKNPVKRFNKISIGLASPESILAESRGEVLKPETINYRTHKPERDGLFCERIFGPVKDFECACGKYKRIRYKGIVCDRCGVEVTEKKVRRDRVGHINLVVPIAHIWYFRSLPNKIGYILGLPSKKLDMIIYYERYVVIQAGIAQNAEGESIKRLDFLTEEEYLNILDTLPADNQYLDDFDPNKFVAKMGAECIMDLLARINLDELSYDLRHKANNETSKQRKTEALKRLQVVESFRESNKNRENRPEWMIMKVVPVIPPELRPLVPLDGGRFATSDLNDLYRRVIIRNNRLKRLMEIKAPEVILRNEKRMLQESVDSLFDNTRKASAVKTESNRPLKSLSDSLKGKQGRFRQNLLGKRVDYSARSVIVVGPELRLFECGIPKDMAAELYKPFVIRKLIERGIVKTVKSAKKIIDKKEPVVWDILENVIKGHPILLNRAPTLHRLGIQAFQPKLIEGKAIQLHPLVCTAFNADFDGDQMAVHLPLGPEAILEAQLLMLASHNILNPANGAPVTVPSQDMVLGLYYMTKERLTTEGHIILGQDLVFYSAEETNIALNEGRVELNARVKIRAKDFNEEGELVYKIIQTTAGRVLFNEVVPEAAGYINDVLTKKNLRDIIGKILAVTDVPTTAAFLDNIKDMGYKFAFKGGLSFSLGDIRIPEQKTQLIADARAQVEGISGNYNMGLITNNERYNQVIDIWTSANAQLTELAMKNIREDQQGFNSVYMMLDSGARGSKEQIRQLTGMRGLMAKPKKSTAGGGEIIENPILSNFKEGLSILEYFISTHGARKGLADTALKTADAGYLTRRLHDVSQDVIVNIEDCGTLRGVEVSALKKNEEIVESLGERILGRVVLQDVVNPLTNDILVHAGEQITEAIMKVIENSPVEKVEVRSPLVCEATKGICAKCYGRNLATGKMTQRGEAVGVIAAQSIGEPGTQLTLRTFHVGGVAGGISEESNILAKFAGRLEIEDLKTVKGEDGEGNLVDIVISRSTEMKLIDQKTGILLATNNIPYGSSIYVNDAQVVEKGDVICKWDPYNGVIVSEFTGKIAYEDLEQGQSFMVEIDEQTGFQEKVISEGRNKKLIPTLLVYGKNDELIRSYNLPVGAHLMVNDGEKIKAGKILVKIPRRSSKTGDITGGLPRITELLEARNPSNPAVVSEIDGVVSFGKIKRGNREIVIESKFGEIKKYLVKLSSQILVQENDFVRAGVPLSDGAITPDDILRIQGPAAVQQYLVNEIQEVYRLQGVKINDKHFEVVIRQMMRKVRVQDPGDTLFLEDQLIHTKDFIVENDKLYGMKVVEDSGDSSNLKAGQIITPRELRDENSLLKRTDKNLVIARDVITATATPVLQGITRASLQTKSFISAASFQETTKVLNEAAVAGKIDYLEGLKENVIVGHRIPAGTGMREYDHTIVGSKEEYNDLMVAKEEFNY.

Residues cysteine 72, cysteine 74, cysteine 87, and cysteine 90 each contribute to the Zn(2+) site. Mg(2+) contacts are provided by aspartate 483, aspartate 485, and aspartate 487. The Zn(2+) site is built by cysteine 831, cysteine 905, cysteine 912, and cysteine 915.

This sequence belongs to the RNA polymerase beta' chain family. As to quaternary structure, the RNAP catalytic core consists of 2 alpha, 1 beta, 1 beta' and 1 omega subunit. When a sigma factor is associated with the core the holoenzyme is formed, which can initiate transcription. It depends on Mg(2+) as a cofactor. The cofactor is Zn(2+).

It catalyses the reaction RNA(n) + a ribonucleoside 5'-triphosphate = RNA(n+1) + diphosphate. Functionally, DNA-dependent RNA polymerase catalyzes the transcription of DNA into RNA using the four ribonucleoside triphosphates as substrates. This is DNA-directed RNA polymerase subunit beta' from Flavobacterium psychrophilum (strain ATCC 49511 / DSM 21280 / CIP 103535 / JIP02/86).